The primary structure comprises 334 residues: L-lactate dehydrogenase B chain (334 aa).

At alanine 2 the chain carries N-acetylalanine. Lysine 7 is subject to N6-acetyllysine. Phosphoserine occurs at positions 11 and 44. Residues 30–58 (GQVGMACAISILGKSLADELALVDVLEDK) and arginine 100 each bind NAD(+). Lysine 58 is subject to N6-acetyllysine. Arginine 107 is a binding site for substrate. The residue at position 119 (lysine 119) is an N6-acetyllysine. Asparagine 139 lines the NAD(+) pocket. Positions 139 and 170 each coordinate substrate. Histidine 194 acts as the Proton acceptor in catalysis. Tyrosine 240 bears the Phosphotyrosine mark. Threonine 249 contributes to the substrate binding site. An N6-acetyllysine modification is found at lysine 329.

It belongs to the LDH/MDH superfamily. LDH family. As to quaternary structure, homotetramer. Interacts with PTEN upstream reading frame protein MP31; the interaction leads to inhibition of mitochondrial lactate dehydrogenase activity, preventing conversion of lactate to pyruvate in mitochondria.

It localises to the cytoplasm. The protein localises to the mitochondrion inner membrane. It catalyses the reaction (S)-lactate + NAD(+) = pyruvate + NADH + H(+). It participates in fermentation; pyruvate fermentation to lactate; (S)-lactate from pyruvate: step 1/1. In terms of biological role, interconverts simultaneously and stereospecifically pyruvate and lactate with concomitant interconversion of NADH and NAD(+). In Mus musculus (Mouse), this protein is L-lactate dehydrogenase B chain (Ldhb).